The primary structure comprises 156 residues: ATP synthase subunit b (156 aa).

Residues 7–29 form a helical membrane-spanning segment; it reads LLGQAISFALFVWFCMKYVWPPL.

Belongs to the ATPase B chain family. In terms of assembly, F-type ATPases have 2 components, F(1) - the catalytic core - and F(0) - the membrane proton channel. F(1) has five subunits: alpha(3), beta(3), gamma(1), delta(1), epsilon(1). F(0) has three main subunits: a(1), b(2) and c(10-14). The alpha and beta chains form an alternating ring which encloses part of the gamma chain. F(1) is attached to F(0) by a central stalk formed by the gamma and epsilon chains, while a peripheral stalk is formed by the delta and b chains.

It is found in the cell inner membrane. Functionally, f(1)F(0) ATP synthase produces ATP from ADP in the presence of a proton or sodium gradient. F-type ATPases consist of two structural domains, F(1) containing the extramembraneous catalytic core and F(0) containing the membrane proton channel, linked together by a central stalk and a peripheral stalk. During catalysis, ATP synthesis in the catalytic domain of F(1) is coupled via a rotary mechanism of the central stalk subunits to proton translocation. Component of the F(0) channel, it forms part of the peripheral stalk, linking F(1) to F(0). The polypeptide is ATP synthase subunit b (Vibrio parahaemolyticus serotype O3:K6 (strain RIMD 2210633)).